We begin with the raw amino-acid sequence, 2771 residues long: Teneurin-4 (2771 aa).

Residues 1–22 (MDVKERKPYRSLTRRRDAERRY) show a composition bias toward basic and acidic residues. A disordered region spans residues 1 to 45 (MDVKERKPYRSLTRRRDAERRYTSSSADSEEGKGPQKSYSSSETL). Residues 1-341 (MDVKERKPYR…KPSKYCNWKC (341 aa)) enclose the Teneurin N-terminal domain. Over 1–345 (MDVKERKPYR…YCNWKCAALS (345 aa)) the chain is Cytoplasmic. Serine 124 is subject to Phosphoserine. Residues 132–233 (WGRSTRSGRS…PPAGSAQEPT (102 aa)) form a disordered region. A compositionally biased stretch (low complexity) spans 134-155 (RSTRSGRSSCLSSRANSNLTLT). A compositionally biased stretch (basic and acidic residues) spans 156 to 166 (DTEHENTETDH). A Phosphothreonine modification is found at threonine 178. Residues 191 to 211 (QHHAASINSLNRGNFTPRSNP) show a composition bias toward polar residues. The chain crosses the membrane as a helical span at residues 346 to 366 (AILISATLVILLAYFVAMHLF). At 367–2771 (GLNWHLQPME…FMRQSEMGRR (2405 aa)) the chain is on the extracellular side. Residues 403-428 (SGGTGLETPDRKGKGAAEGKPSSLFP) are disordered. Residues 410 to 419 (TPDRKGKGAA) show a composition bias toward basic and acidic residues. Asparagine 469 carries N-linked (GlcNAc...) asparagine glycosylation. Residues 509–528 (ARSLEGPQRQSRGPVPPSSH) are disordered. EGF-like domains follow at residues 564–595 (SVDNCPSNCYGNGDCISGTCHCFLGFLGPDCG), 596–626 (RASCPVLCSGNGQYMKGRCLCHSGWKGAECD), 628–660 (PTNQCIDVACSSHGTCIMGTCICNPGYKGESCE), 661–692 (EVDCMDPTCSSRGVCVRGECHCSVGWGGTNCE), 694–727 (PRATCLDQCSGHGTFLPDTGLCNCDPSWTGHDCS), 728–759 (IEICAADCGGHGVCVGGTCRCEDGWMGAACDQ), 760–789 (RACHPRCAEHGTCRDGKCECSPGWNGEHCT), and 790–833 (IAHY…TGCD). Disulfide bonds link cysteine 568/cysteine 578, cysteine 572/cysteine 583, cysteine 585/cysteine 594, cysteine 603/cysteine 614, cysteine 616/cysteine 625, cysteine 632/cysteine 643, cysteine 637/cysteine 648, cysteine 650/cysteine 659, cysteine 664/cysteine 675, cysteine 669/cysteine 680, cysteine 682/cysteine 691, cysteine 702/cysteine 715, cysteine 717/cysteine 726, cysteine 731/cysteine 741, cysteine 735/cysteine 746, cysteine 748/cysteine 757, cysteine 762/cysteine 772, cysteine 766/cysteine 777, cysteine 779/cysteine 788, cysteine 802/cysteine 812, cysteine 806/cysteine 821, and cysteine 823/cysteine 832. 2 N-linked (GlcNAc...) asparagine glycosylation sites follow: asparagine 942 and asparagine 1261. NHL repeat units lie at residues 1218-1261 (SCPS…PSGN), 1266-1310 (LEMR…VKST), 1336-1380 (TRCG…NGII), 1395-1446 (LSCD…VAGR), and 1525-1568 (CFSG…IRKN). One copy of the YD 1 repeat lies at 1578–1597 (YELSSPIDQELYLFDTSGKH). Residue asparagine 1611 is glycosylated (N-linked (GlcNAc...) asparagine). YD repeat units follow at residues 1614–1634 (YTGDGDITHITDNNGNMVNVR), 1677–1696 (YHGNSGLLATKSNENGWTTF), and 1697–1719 (YEYDSFGRLTNVTFPTGQVSSFR). Asparagine 1707, asparagine 1743, asparagine 1801, and asparagine 1886 each carry an N-linked (GlcNAc...) asparagine glycan. 18 YD repeats span residues 1889 to 1908 (YSPGGHIAGIQRGIMSERME), 1930 to 1948 (YLEKSMVLHLHSQRQYIFE), 1949 to 1969 (FDKNDRLSSVTMPNVARQTLE), 1976 to 1993 (YYRNIYQPPEGNASVIQD), 1994 to 2015 (FTEDGHLLHTFYLGTGRRVIYK), 2016 to 2033 (YGKLSKLAETLYDTTKVS), 2036 to 2056 (YDETAGMLKTVNLQNEGFTCT), 2059 to 2079 (YRQIGPLIDRQIFRFTEEGMV), 2087 to 2106 (YDNSFRVTSMQAVINETPLP), 2112 to 2129 (YDDVSGKTEQFGKFGVIY), 2130 to 2156 (YDINQIITTAVMTHTKHFDAYGRMKEV), 2158 to 2171 (YEIFRSLMYWMTVQ), 2172 to 2195 (YDNMGRVVKKELKVGPYANTTRYS), 2198 to 2218 (YDADGQLQTVSINDKPLWRYS), 2219 to 2239 (YDLNGNLHLLSPGNSARLTPL), 2241 to 2261 (YDLRDRITRLGDVQYKMDEDG), 2273 to 2293 (YNSAGLLIKAYNRASGWSVRY), and 2295 to 2315 (YDGLGRRVSSKSSHSHHLQFF). An N-linked (GlcNAc...) asparagine glycan is attached at asparagine 1987. N-linked (GlcNAc...) asparagine glycosylation is present at asparagine 2190. Residue asparagine 2330 is glycosylated (N-linked (GlcNAc...) asparagine). Residues 2341-2382 (YDLQGHLFAMELSSGDEFYIACDNIGTPLAVFSGTGLMIKQI) form a YD 23 repeat. Residue asparagine 2648 is glycosylated (N-linked (GlcNAc...) asparagine).

The protein belongs to the tenascin family. Teneurin subfamily. As to quaternary structure, homodimer; disulfide-linked. May also form heterodimer with either TENM1 or TENM2 or TENM3. Expressed in brain and spinal cord (at protein level). Expressed in neurons and oligodendrocytes of the spinal cord. Expressed weakly in kidney, lung and spleen. Expressed in the cortex, CA1, CA2 and CA3 of the hippocampus. Expressed in the white matter, Purkinje cells and molecular layer of the cerebellum.

The protein localises to the cell membrane. The protein resides in the cell projection. Its subcellular location is the nucleus. It is found in the cytoplasm. Involved in neural development, regulating the establishment of proper connectivity within the nervous system. Plays a role in the establishment of the anterior-posterior axis during gastrulation. Regulates the differentiation and cellular process formation of oligodendrocytes and myelination of small-diameter axons in the central nervous system (CNS). Promotes activation of focal adhesion kinase. May function as a cellular signal transducer. In Mus musculus (Mouse), this protein is Teneurin-4 (Tenm4).